Consider the following 137-residue polypeptide: Small ribosomal subunit protein bS16 (137 aa).

Residues 104–118 (ADEKKKPVLKPKTEK) are compositionally biased toward basic and acidic residues. The interval 104–137 (ADEKKKPVLKPKTEKAAPAPEAAAPEAESTEEQA) is disordered. Over residues 119 to 130 (AAPAPEAAAPEA) the composition is skewed to low complexity.

It belongs to the bacterial ribosomal protein bS16 family.

This is Small ribosomal subunit protein bS16 from Clavibacter michiganensis subsp. michiganensis (strain NCPPB 382).